The primary structure comprises 695 residues: MSAFEQAAREQAARLRAEIAQHNIRYYVYDEPSITDADYDALMRELMALEAQHPELVTPDSPTQRVGAAPLAEFGSVRHAVPMLSLGNGFEDEDVLAFDKRVSDTLREAGLLGPAEQAHYFCELKLDGLAISLRYENGELVQAATRGDGQEGEDVTANIRTIRAIPLQLRAGAPAVLEVRGEVLMNRADFEKLNQKQAARGEKIFVNPRNAAAGSLRQLDPRVTAQRPLRFFAYSWGEVQGLSRDDAPAFDEASPGLVSTLPRDTHGGMLDWLAGLGLPVNVRFNHKAQGAEGLLAFYRRIGAERGSLPYDIDGLVYKVDALAAQRVLGYVARAPRWALAHKFPAEEATTELLDIEVQVGRTGAITPVARLKPVFVGGVTVTNATLHNEDEIRRKDVRIGDRVIVRRAGDVIPEVVGPVLEKRSGELPQFVMPTHCPICGSAIERLVDEAIARCTGGLFCPAQRKQTLLHAAGRKALDIEGLGEKLVEQLVDNGSLKTLADVFRLNAFELAALDRMGKKSADNLVAAIDQARRPSLGRLLFALGIRHVGETTARDVARHFGNIDAIMDADEAALLAVPDVGPVVAGSIHRFFQEAHNREVIRELEKQGVHPQAEAQLQSGDLAGKTFVLTGTMPTWSRDEATRHILAAGGKVSGSVSKKTAYVVAGEEAGSKLVKARELGVTILDEDGLKALLSQ.

Residues aspartate 36–aspartate 40, serine 85–leucine 86, and glutamate 123 each bind NAD(+). The N6-AMP-lysine intermediate role is filled by lysine 125. Residues arginine 146, glutamate 182, lysine 318, and lysine 342 each coordinate NAD(+). Zn(2+) contacts are provided by cysteine 436, cysteine 439, cysteine 454, and cysteine 460. The BRCT domain occupies leucine 617–glutamine 695.

Belongs to the NAD-dependent DNA ligase family. LigA subfamily. The cofactor is Mg(2+). Requires Mn(2+) as cofactor.

The enzyme catalyses NAD(+) + (deoxyribonucleotide)n-3'-hydroxyl + 5'-phospho-(deoxyribonucleotide)m = (deoxyribonucleotide)n+m + AMP + beta-nicotinamide D-nucleotide.. DNA ligase that catalyzes the formation of phosphodiester linkages between 5'-phosphoryl and 3'-hydroxyl groups in double-stranded DNA using NAD as a coenzyme and as the energy source for the reaction. It is essential for DNA replication and repair of damaged DNA. The polypeptide is DNA ligase (Bordetella avium (strain 197N)).